Reading from the N-terminus, the 299-residue chain is Leucine zipper transcription factor-like protein 1 (299 aa).

A coiled-coil region spans residues 96–296; that stretch reads LKLQTDISEL…DLRKRLAKYE (201 aa). The segment at 145-299 is interaction with BSS9; it reads GAAELLNKEI…KRLAKYEPED (155 aa).

This sequence belongs to the LZTFL1 family. As to quaternary structure, self-associates. Interacts with BBS9; the interaction mediates the association of LZTL1 with the BBsome complex and regulates BBSome ciliary trafficking.

Its subcellular location is the cytoplasm. In terms of biological role, regulates ciliary localization of the BBSome complex. Together with the BBSome complex, controls SMO ciliary trafficking and contributes to the sonic hedgehog (SHH) pathway regulation. May play a role in neurite outgrowth. May have tumor suppressor function. The polypeptide is Leucine zipper transcription factor-like protein 1 (LZTFL1) (Bos taurus (Bovine)).